A 547-amino-acid chain; its full sequence is TBCC domain-containing protein 1 (547 aa).

The 132-residue stretch at 304–435 (PHTHRMVVMS…LEDHMAHTGL (132 aa)) folds into the C-CAP/cofactor C-like domain.

This sequence belongs to the TBCC family.

It is found in the cytoplasm. It localises to the cytoskeleton. Its subcellular location is the microtubule organizing center. The protein resides in the centrosome. The protein localises to the spindle pole. In terms of biological role, may play a role in the regulation of centrosome and Golgi apparatus positioning. This is TBCC domain-containing protein 1 (tbccd1) from Xenopus tropicalis (Western clawed frog).